We begin with the raw amino-acid sequence, 1166 residues long: Zinc finger CCHC domain-containing protein 2 (1166 aa).

Disordered regions lie at residues 1-85, 205-240, 550-668, and 904-982; these read MLRM…GGHA, RAEG…CAKL, SSAD…ARFS, and PASF…ISAV. Positions 43-64 are enriched in pro residues; sequence PPPPPTGLPRGPPPPPSPPRGL. A compositionally biased stretch (low complexity) spans 65 to 76; that stretch reads EPPVASGPTAGA. Positions 214–223 are enriched in acidic residues; the sequence is EDEPSGDGEQ. Over residues 572 to 587 the composition is skewed to basic and acidic residues; sequence PQVEKEKVKKTEDRLN. The span at 624–633 shows a compositional bias: low complexity; it reads SSESYSSPSS. The span at 634-653 shows a compositional bias: basic and acidic residues; it reads PRHDGRESLESEEEKDRDSD. Polar residues predominate over residues 919 to 947; the sequence is LPTQNSSALNAATSAQPASTGISPSQSTV. The span at 949-963 shows a compositional bias: pro residues; that stretch reads PAVPTHTPGPAPSPS. A compositionally biased stretch (polar residues) spans 964-982; the sequence is PALTHSTAQSDSTSYISAV. A CCHC-type zinc finger spans residues 1119-1136; it reads VSCYNCGVSGHYAQDCKQ.

This Mus musculus (Mouse) protein is Zinc finger CCHC domain-containing protein 2 (Zcchc2).